A 365-amino-acid chain; its full sequence is WAT1-related protein At4g01430 (365 aa).

Helical transmembrane passes span 7-27 (WAPV…NALV), 39-59 (IFGA…SYIW), 76-96 (FISG…GLSY), 100-120 (TVSM…ALIF), 132-152 (AGVL…LLTF), 183-203 (WLLG…WMLF), 216-236 (YSST…LSLY), 250-270 (FVIL…TVVT), 280-300 (VFVS…DFLI), and 305-325 (LYLG…VFLW). Residues 20–151 (MGSVNALVKK…ICIMGAMLLT (132 aa)) form the EamA 1 domain. The region spanning 216–324 (YSSTCLMSVF…VTITGLYVFL (109 aa)) is the EamA 2 domain. Positions 339 to 365 (LNSSQFSQNKDNEDHTIANHKDTNLPV) are disordered. Over residues 348–365 (KDNEDHTIANHKDTNLPV) the composition is skewed to basic and acidic residues.

It belongs to the drug/metabolite transporter (DMT) superfamily. Plant drug/metabolite exporter (P-DME) (TC 2.A.7.4) family.

It localises to the membrane. This is WAT1-related protein At4g01430 from Arabidopsis thaliana (Mouse-ear cress).